The sequence spans 466 residues: Zinc finger protein NUTCRACKER (466 aa).

Residues 1–23 (MTSEVLQTISSGSGFAQPQSSST) are compositionally biased toward polar residues. Residues 1 to 29 (MTSEVLQTISSGSGFAQPQSSSTLDHDES) are disordered. A Phosphoserine modification is found at S56. The C2H2-type 1 zinc finger occupies 66–88 (FLCEVCGKGFQRDQNLQLHRRGH). Phosphothreonine; by KIN10 is present on T98. The C2H2-type 2 zinc finger occupies 107–137 (YVCPEKTCVHHHSSRALGDLTGIKKHFCRKH). The Nuclear localization signal signature appears at 134–141 (CRKHGEKK). The segment at 142–165 (WTCEKCAKRYAVQSDWKAHSKTCG) adopts a C2H2-type 2; degenerate zinc-finger fold. Zn(2+) contacts are provided by C144, C147, H160, C164, C171, and C173. A CCHC-type 2; atypical zinc finger spans residues 169 to 192 (YRCDCGTIFSRRDSFITHRAFCDA). 2 positions are modified to phosphoserine; by KIN10: S178 and S182. The SHR-binding stretch occupies residues 179–191 (RRDSFITHRAFCD). H186 and C190 together coordinate Zn(2+).

As to quaternary structure, interacts with AKIN10. Inhibition of transcription factor activity by KIN10-mediated phosphorylation at Thr-98, Ser-178 and Ser-182 under sugar deprivation conditions, thus delaying flowering. In terms of tissue distribution, highly expressed in vegetative organs and at lower levels in flowers and siliques. Expressed predominantly in roots. In roots, present in cortex, endodermis, and pericycle layer.

The protein localises to the nucleus. Transcription activator that binds to the DNA sequence 5'-CTTTTGTCC-3'. Regulates photoperiodic flowering by modulating sugar transport and metabolism. Regulates SUS1 and SUS4. Transcription factor that regulates tissue boundaries and asymmetric cell division. Contributes to the sequestration of 'SHORT-ROOT' to the nucleus. The chain is Zinc finger protein NUTCRACKER from Arabidopsis thaliana (Mouse-ear cress).